Consider the following 55-residue polypeptide: Large ribosomal subunit protein bL33 (55 aa).

This sequence belongs to the bacterial ribosomal protein bL33 family.

The protein is Large ribosomal subunit protein bL33 of Gluconacetobacter diazotrophicus (strain ATCC 49037 / DSM 5601 / CCUG 37298 / CIP 103539 / LMG 7603 / PAl5).